Consider the following 434-residue polypeptide: MEISSHQSYLLQQLNEQRRQDVFCDCSILVEGKVFKAHRNVLFASSGYFKMLLSQNSRETSQPTTATFQTFSPDTFTVILDFVYSGKLSLTGQNVIEVMSAASFLQMTDVISVCKTFIKSSLDISEKEKDRYFSLSDKDTGSNGVERPPFYSSSWQEEGGSPHSHVSPDPGKPWNKYGYPPASQRSPQRPLAKHEQRKEPSKKAKHVRLPQPSEVVHFKPGKGEAQTDSGNHVSQSEEQVPVDAEVDPAPAGFQYSQGPDGIARSFPDDLTRLRFKCPFCTHVVKRKADLKRHLRCHTGERPYPCQACGKRFSRLDHLSSHFRTIHQACKLICRKCKRHVTDLTGQVVQEGTRRYRLCNECLADVGMESLPADLEAEQHRTAPADGDKDCRWHLSEEENRSYVEIVEDGSADLVIQQVDDSEEEEEKEIKPNIR.

The BTB domain maps to 24–92 (CDCSILVEGK…VYSGKLSLTG (69 aa)). Positions 134 to 238 (SLSDKDTGSN…SGNHVSQSEE (105 aa)) are disordered. Phosphoserine is present on residues Ser-161 and Ser-167. Residues Lys-172, Lys-176, and Lys-193 each participate in a glycyl lysine isopeptide (Lys-Gly) (interchain with G-Cter in SUMO2) cross-link. Residues 192–202 (AKHEQRKEPSK) are compositionally biased toward basic and acidic residues. Residues 226–238 (QTDSGNHVSQSEE) show a composition bias toward polar residues. 2 C2H2-type zinc fingers span residues 275 to 297 (FKCP…LRCH) and 303 to 326 (YPCQ…RTIH). Lys-430 is covalently cross-linked (Glycyl lysine isopeptide (Lys-Gly) (interchain with G-Cter in SUMO2)).

It localises to the nucleus. Functionally, may be involved in transcriptional regulation. In Mus musculus (Mouse), this protein is Zinc finger and BTB domain-containing protein 8A (Zbtb8a).